A 297-amino-acid chain; its full sequence is Protein BCCIP homolog (297 aa).

Residues 1–40 (MSANKQKKLSTMEVDPNEDVSSSSEDDDDDEPHPDAYKGN) form a disordered region.

This sequence belongs to the BCP1 family.

The polypeptide is Protein BCCIP homolog (Drosophila melanogaster (Fruit fly)).